A 108-amino-acid polypeptide reads, in one-letter code: Replication restart protein PriB (108 aa).

Residues 8–108 (IDNRFSVMGV…LHAEQIEFID (101 aa)) form the SSB domain.

This sequence belongs to the PriB family. Homodimer. Interacts with PriA and DnaT. Component of the replication restart primosome. Primosome assembly occurs via a 'hand-off' mechanism. PriA binds to replication forks, subsequently PriB then DnaT bind; DnaT then displaces ssDNA to generate the helicase loading substrate.

Its function is as follows. Involved in the restart of stalled replication forks, which reloads the replicative helicase on sites other than the origin of replication; the PriA-PriB pathway is the major replication restart pathway. During primosome assembly it facilitates complex formation between PriA and DnaT on DNA; stabilizes PriA on DNA. Stimulates the DNA unwinding activity of PriA helicase. The sequence is that of Replication restart protein PriB from Haemophilus influenzae (strain 86-028NP).